We begin with the raw amino-acid sequence, 461 residues long: Ribulose bisphosphate carboxylase (461 aa).

Asn112 is a substrate binding site. The Proton acceptor role is filled by Lys167. Lys169 serves as a coordination point for substrate. Mg(2+) is bound by residues Lys192, Asp194, and Glu195. At Lys192 the chain carries N6-carboxylysine. The active-site Proton acceptor is the His288. Residues Arg289, His322, and Ser369 each coordinate substrate.

This sequence belongs to the RuBisCO large chain family. Type II subfamily. Homodimer. The cofactor is Mg(2+).

The catalysed reaction is 2 (2R)-3-phosphoglycerate + 2 H(+) = D-ribulose 1,5-bisphosphate + CO2 + H2O. It catalyses the reaction D-ribulose 1,5-bisphosphate + O2 = 2-phosphoglycolate + (2R)-3-phosphoglycerate + 2 H(+). Its function is as follows. RuBisCO catalyzes two reactions: the carboxylation of D-ribulose 1,5-bisphosphate, the primary event in carbon dioxide fixation, as well as the oxidative fragmentation of the pentose substrate. Both reactions occur simultaneously and in competition at the same active site. This is Ribulose bisphosphate carboxylase from Rhodopseudomonas palustris (strain BisB18).